A 270-amino-acid chain; its full sequence is 3-methyl-2-oxobutanoate hydroxymethyltransferase (270 aa).

Aspartate 50 and aspartate 89 together coordinate Mg(2+). Residues 50 to 51 (DS), aspartate 89, and lysine 118 contribute to the 3-methyl-2-oxobutanoate site. A Mg(2+)-binding site is contributed by glutamate 120. The active-site Proton acceptor is glutamate 187.

The protein belongs to the PanB family. In terms of assembly, homodecamer; pentamer of dimers. Mg(2+) is required as a cofactor.

It is found in the cytoplasm. It catalyses the reaction 3-methyl-2-oxobutanoate + (6R)-5,10-methylene-5,6,7,8-tetrahydrofolate + H2O = 2-dehydropantoate + (6S)-5,6,7,8-tetrahydrofolate. Its pathway is cofactor biosynthesis; (R)-pantothenate biosynthesis; (R)-pantoate from 3-methyl-2-oxobutanoate: step 1/2. In terms of biological role, catalyzes the reversible reaction in which hydroxymethyl group from 5,10-methylenetetrahydrofolate is transferred onto alpha-ketoisovalerate to form ketopantoate. The polypeptide is 3-methyl-2-oxobutanoate hydroxymethyltransferase (Helicobacter pylori (strain ATCC 700392 / 26695) (Campylobacter pylori)).